The following is a 560-amino-acid chain: Dihydroxy-acid dehydratase (560 aa).

Position 52 (C52) interacts with [2Fe-2S] cluster. Residue D84 participates in Mg(2+) binding. [2Fe-2S] cluster is bound at residue C125. Residues D126 and K127 each coordinate Mg(2+). N6-carboxylysine is present on K127. C197 provides a ligand contact to [2Fe-2S] cluster. E448 is a Mg(2+) binding site. S474 acts as the Proton acceptor in catalysis.

It belongs to the IlvD/Edd family. Homodimer. It depends on [2Fe-2S] cluster as a cofactor. Mg(2+) is required as a cofactor.

It catalyses the reaction (2R)-2,3-dihydroxy-3-methylbutanoate = 3-methyl-2-oxobutanoate + H2O. The enzyme catalyses (2R,3R)-2,3-dihydroxy-3-methylpentanoate = (S)-3-methyl-2-oxopentanoate + H2O. It functions in the pathway amino-acid biosynthesis; L-isoleucine biosynthesis; L-isoleucine from 2-oxobutanoate: step 3/4. It participates in amino-acid biosynthesis; L-valine biosynthesis; L-valine from pyruvate: step 3/4. In terms of biological role, functions in the biosynthesis of branched-chain amino acids. Catalyzes the dehydration of (2R,3R)-2,3-dihydroxy-3-methylpentanoate (2,3-dihydroxy-3-methylvalerate) into 2-oxo-3-methylpentanoate (2-oxo-3-methylvalerate) and of (2R)-2,3-dihydroxy-3-methylbutanoate (2,3-dihydroxyisovalerate) into 2-oxo-3-methylbutanoate (2-oxoisovalerate), the penultimate precursor to L-isoleucine and L-valine, respectively. The sequence is that of Dihydroxy-acid dehydratase from Leptospira borgpetersenii serovar Hardjo-bovis (strain JB197).